The sequence spans 179 residues: Large ribosomal subunit protein bL17 (179 aa).

A disordered region spans residues 127 to 179; sequence TDTLPDTVIDTGPDSAPDPVPGSEPGSAAGDLPDADTAPADPGESSSNQRVIR. Low complexity predominate over residues 154 to 168; that stretch reads AAGDLPDADTAPADP. Polar residues predominate over residues 170-179; sequence ESSSNQRVIR.

This sequence belongs to the bacterial ribosomal protein bL17 family. As to quaternary structure, part of the 50S ribosomal subunit. Contacts protein L32.

This is Large ribosomal subunit protein bL17 from Tropheryma whipplei (strain TW08/27) (Whipple's bacillus).